A 66-amino-acid chain; its full sequence is Large ribosomal subunit protein bL35 (66 aa).

Residues 1–23 (MPKMKTHRASAKRFKRTANGGLK) are disordered.

It belongs to the bacterial ribosomal protein bL35 family.

The protein is Large ribosomal subunit protein bL35 of Lactobacillus helveticus (strain DPC 4571).